A 408-amino-acid polypeptide reads, in one-letter code: Succinylornithine transaminase (408 aa).

K252 is modified (N6-(pyridoxal phosphate)lysine).

Belongs to the class-III pyridoxal-phosphate-dependent aminotransferase family. AstC subfamily. Pyridoxal 5'-phosphate serves as cofactor.

It catalyses the reaction N(2)-succinyl-L-ornithine + 2-oxoglutarate = N-succinyl-L-glutamate 5-semialdehyde + L-glutamate. The protein operates within amino-acid degradation; L-arginine degradation via AST pathway; L-glutamate and succinate from L-arginine: step 3/5. Catalyzes the transamination of N(2)-succinylornithine and alpha-ketoglutarate into N(2)-succinylglutamate semialdehyde and glutamate. Can also act as an acetylornithine aminotransferase. This chain is Succinylornithine transaminase, found in Salmonella paratyphi A (strain ATCC 9150 / SARB42).